The following is a 482-amino-acid chain: MRNYRSPIGKMTPGVEVDREAPVVRAATVAEGADVAEQHTGVGHQRGARPWPLPRRIATLSVHTSPLHQPGTGDAGGMNVYILEVARRLAEANVEVEIFTRATAADLPPVVEMVPGVHVRHIMSGPLGGLTKEELPGQLCAFTAGVLRAEAVRAAGHYDLIHSHYWLSGQVGWLAKERWGVPLVHTAHTLAKVKNAQLAAGDRPEPKARVIGEEQVVAEADRLVANTKTEAGDLIDRYDADPTRVEVVEPGVDLARFCPASGDRARAQVLARRRLDLPERGYVVAFVGRIQPLKAPDVLIRAAAALRQRDPALADDMTVVVCGGPSGSGLERPTHLIELAAALGITDRVRFLPPQTGDDLPALYRAADLVAVPSYNESFGLVALEAQACGTPVVAAAVGGLNTAVRDEVSGVLVDGHDPVAWARSLGRLLPDAGRRAMLARGAQRHARNFSWDRTVKDLLDVYGEAVAEHRTRLSDFATCSR.

H63 is a binding site for 1D-myo-inositol 3-phosphate. UDP-N-acetyl-alpha-D-glucosamine contacts are provided by residues 69 to 70 (QP) and G77. Residues 74–79 (DAGGMN), K132, Y165, T189, and R209 each bind 1D-myo-inositol 3-phosphate. UDP-N-acetyl-alpha-D-glucosamine-binding residues include R289, K294, and Q355. Mg(2+)-binding residues include Y364, R365, and A367. The UDP-N-acetyl-alpha-D-glucosamine site is built by E377 and E385. T391 contacts Mg(2+).

It belongs to the glycosyltransferase group 1 family. MshA subfamily. Homodimer.

It catalyses the reaction 1D-myo-inositol 3-phosphate + UDP-N-acetyl-alpha-D-glucosamine = 1D-myo-inositol 2-acetamido-2-deoxy-alpha-D-glucopyranoside 3-phosphate + UDP + H(+). Catalyzes the transfer of a N-acetyl-glucosamine moiety to 1D-myo-inositol 3-phosphate to produce 1D-myo-inositol 2-acetamido-2-deoxy-glucopyranoside 3-phosphate in the mycothiol biosynthesis pathway. This chain is D-inositol 3-phosphate glycosyltransferase, found in Salinispora tropica (strain ATCC BAA-916 / DSM 44818 / JCM 13857 / NBRC 105044 / CNB-440).